A 68-amino-acid polypeptide reads, in one-letter code: ATP synthase F(0) complex subunit 8 (68 aa).

Residues 8 to 21 traverse the membrane as a helical segment; that stretch reads VWPTMITPMLLTLF. At lysine 54 the chain carries N6-acetyllysine; alternate. Lysine 54 is subject to N6-succinyllysine; alternate. Lysine 57 carries the N6-acetyllysine modification.

Belongs to the ATPase protein 8 family. In terms of assembly, component of the ATP synthase complex composed at least of ATP5F1A/subunit alpha, ATP5F1B/subunit beta, ATP5MC1/subunit c (homooctomer), MT-ATP6/subunit a, MT-ATP8/subunit 8, ATP5ME/subunit e, ATP5MF/subunit f, ATP5MG/subunit g, ATP5MK/subunit k, ATP5MJ/subunit j, ATP5F1C/subunit gamma, ATP5F1D/subunit delta, ATP5F1E/subunit epsilon, ATP5PF/subunit F6, ATP5PB/subunit b, ATP5PD/subunit d, ATP5PO/subunit OSCP. ATP synthase complex consists of a soluble F(1) head domain (subunits alpha(3) and beta(3)) - the catalytic core - and a membrane F(0) domain - the membrane proton channel (subunits c, a, 8, e, f, g, k and j). These two domains are linked by a central stalk (subunits gamma, delta, and epsilon) rotating inside the F1 region and a stationary peripheral stalk (subunits F6, b, d, and OSCP). Interacts with PRICKLE3.

The protein localises to the mitochondrion membrane. Subunit 8, of the mitochondrial membrane ATP synthase complex (F(1)F(0) ATP synthase or Complex V) that produces ATP from ADP in the presence of a proton gradient across the membrane which is generated by electron transport complexes of the respiratory chain. ATP synthase complex consist of a soluble F(1) head domain - the catalytic core - and a membrane F(1) domain - the membrane proton channel. These two domains are linked by a central stalk rotating inside the F(1) region and a stationary peripheral stalk. During catalysis, ATP synthesis in the catalytic domain of F(1) is coupled via a rotary mechanism of the central stalk subunits to proton translocation. In vivo, can only synthesize ATP although its ATP hydrolase activity can be activated artificially in vitro. Part of the complex F(0) domain. The polypeptide is ATP synthase F(0) complex subunit 8 (Homo sapiens (Human)).